An 82-amino-acid polypeptide reads, in one-letter code: Large ribosomal subunit protein bL28 (82 aa).

The protein belongs to the bacterial ribosomal protein bL28 family.

This Vesicomyosocius okutanii subsp. Calyptogena okutanii (strain HA) protein is Large ribosomal subunit protein bL28.